The chain runs to 307 residues: Protein FAM76A (307 aa).

2 disordered regions span residues 161 to 181 (SRLS…SSIQ) and 287 to 307 (KQAA…ITSP). Positions 217 to 297 (IIAQLKEEVA…QAAALSKGKK (81 aa)) form a coiled coil.

Belongs to the FAM76 family.

The polypeptide is Protein FAM76A (FAM76A) (Gallus gallus (Chicken)).